A 175-amino-acid polypeptide reads, in one-letter code: Adenine phosphoribosyltransferase (175 aa).

Belongs to the purine/pyrimidine phosphoribosyltransferase family. In terms of assembly, homodimer.

The protein resides in the cytoplasm. The catalysed reaction is AMP + diphosphate = 5-phospho-alpha-D-ribose 1-diphosphate + adenine. It functions in the pathway purine metabolism; AMP biosynthesis via salvage pathway; AMP from adenine: step 1/1. In terms of biological role, catalyzes a salvage reaction resulting in the formation of AMP, that is energically less costly than de novo synthesis. The protein is Adenine phosphoribosyltransferase of Lactobacillus acidophilus (strain ATCC 700396 / NCK56 / N2 / NCFM).